The chain runs to 546 residues: Probable protein kinase UbiB (546 aa).

The 379-residue stretch at 124–502 (DFEIKPLASA…HVRQGQSRYF (379 aa)) folds into the Protein kinase domain. ATP is bound by residues 130-138 (LASASIAQV) and Lys-153. Asp-288 (proton acceptor) is an active-site residue. Helical transmembrane passes span 501-521 (YFLG…VSRP) and 522-542 (EWGL…FVGW).

Belongs to the ABC1 family. UbiB subfamily.

The protein localises to the cell inner membrane. Its pathway is cofactor biosynthesis; ubiquinone biosynthesis [regulation]. Is probably a protein kinase regulator of UbiI activity which is involved in aerobic coenzyme Q (ubiquinone) biosynthesis. The polypeptide is Probable protein kinase UbiB (Escherichia coli (strain SMS-3-5 / SECEC)).